The following is a 60-amino-acid chain: 5-hydroxytryptamine receptor 2B (60 aa).

Over 1-4 (VLCP) the chain is Extracellular. A helical transmembrane segment spans residues 5 to 26 (AWLFLDVLFSTASIMHLCAISV). 2 residues coordinate ergotamine: Asp10 and Thr15. A DRY motif; important for ligand-induced conformation changes motif is present at residues 27-29 (DRY). At 27–46 (DRYIAIKKPIQANQYNSRAT) the chain is on the cytoplasmic side. A helical transmembrane segment spans residues 47-60 (AFIKITVVWLISIG).

It belongs to the G-protein coupled receptor 1 family. Interacts (via C-terminus) with MPDZ. Detected in aorta, renal artery, jugular vein, vena cava and femoral vein.

The protein localises to the cell membrane. It localises to the synapse. It is found in the synaptosome. Functionally, G-protein coupled receptor for 5-hydroxytryptamine (serotonin). Also functions as a receptor for various ergot alkaloid derivatives and psychoactive substances. Ligand binding causes a conformation change that triggers signaling via guanine nucleotide-binding proteins (G proteins) and modulates the activity of downstream effectors. HTR2B is coupled to G(q)/G(11) G alpha proteins and activates phospholipase C-beta, releasing diacylglycerol (DAG) and inositol 1,4,5-trisphosphate (IP3) second messengers that modulate the activity of phosphatidylinositol 3-kinase and promote the release of Ca(2+) ions from intracellular stores, respectively. Beta-arrestin family members inhibit signaling via G proteins and mediate activation of alternative signaling pathways. Plays a role in the regulation of dopamine and 5-hydroxytryptamine release, 5-hydroxytryptamine uptake and in the regulation of extracellular dopamine and 5-hydroxytryptamine levels, and thereby affects neural activity. May play a role in the perception of pain. Plays a role in the regulation of behavior, including impulsive behavior. Required for normal proliferation of embryonic cardiac myocytes and normal heart development. Protects cardiomyocytes against apoptosis. Plays a role in the adaptation of pulmonary arteries to chronic hypoxia. Plays a role in vasoconstriction. Required for normal osteoblast function and proliferation, and for maintaining normal bone density. Required for normal proliferation of the interstitial cells of Cajal in the intestine. The sequence is that of 5-hydroxytryptamine receptor 2B (HTR2B) from Sus scrofa (Pig).